The primary structure comprises 287 residues: Histone H1 (287 aa).

A compositionally biased stretch (low complexity) spans 1–11 (MATEEPVIVNE). Disordered regions lie at residues 1 to 58 (MATE…THPP) and 120 to 287 (YKLP…RGRK). Over residues 33–51 (GKAKKETKAKKPAAPRKRS) the composition is skewed to basic residues. The 70-residue stretch at 55–124 (THPPYFEMIK…KVKNSYKLPS (70 aa)) folds into the H15 domain. Residues 135–202 (AKKKPAAAKS…KAKPVAKAKP (68 aa)) are compositionally biased toward basic residues. The span at 203-248 (KAAAAAKPKAAVKPKAAPAKTKAAVKPNLKAKTTTAKVAKTATRTT) shows a compositional bias: low complexity. Residues 276-287 (PAKKATPKRGRK) show a composition bias toward basic residues.

This sequence belongs to the histone H1/H5 family.

Its subcellular location is the nucleus. The protein localises to the chromosome. Histones H1 are necessary for the condensation of nucleosome chains into higher-order structures. The polypeptide is Histone H1 (Solanum lycopersicum (Tomato)).